The sequence spans 125 residues: Fluoride-specific ion channel FluC (125 aa).

Transmembrane regions (helical) follow at residues 6-26 (GFIA…SGLV), 34-54 (FPWG…LVWE), 68-88 (AVLL…IFES), and 98-118 (LALL…LFAG). Residues Gly76 and Thr79 each coordinate Na(+).

It belongs to the fluoride channel Fluc/FEX (TC 1.A.43) family.

The protein localises to the cell inner membrane. It carries out the reaction fluoride(in) = fluoride(out). Na(+) is not transported, but it plays an essential structural role and its presence is essential for fluoride channel function. In terms of biological role, fluoride-specific ion channel. Important for reducing fluoride concentration in the cell, thus reducing its toxicity. The protein is Fluoride-specific ion channel FluC of Solidesulfovibrio magneticus (strain ATCC 700980 / DSM 13731 / RS-1) (Desulfovibrio magneticus).